The sequence spans 279 residues: Large ribosomal subunit protein uL2 (279 aa).

Disordered regions lie at residues 29–59 and 224–279; these read PEKS…GGHK and VAMN…KNKR. Residues 50 to 59 show a composition bias toward basic residues; it reads TTRHKGGGHK. Over residues 253–268 the composition is skewed to basic and acidic residues; it reads PEGRTRRPNKESDKLI. A compositionally biased stretch (basic residues) spans 269–279; it reads VRRRRTGKNKR.

It belongs to the universal ribosomal protein uL2 family. Part of the 50S ribosomal subunit. Forms a bridge to the 30S subunit in the 70S ribosome.

Functionally, one of the primary rRNA binding proteins. Required for association of the 30S and 50S subunits to form the 70S ribosome, for tRNA binding and peptide bond formation. It has been suggested to have peptidyltransferase activity; this is somewhat controversial. Makes several contacts with the 16S rRNA in the 70S ribosome. This chain is Large ribosomal subunit protein uL2, found in Paenarthrobacter aurescens (strain TC1).